The primary structure comprises 585 residues: Polyadenylate-binding protein, cytoplasmic and nuclear (585 aa).

A disordered region spans residues 14 to 37 (QLKIEEQTAPTTTESETPKVETSG). RRM domains follow at residues 38–116 (ASLY…WSQR), 126–203 (GNIY…LHVS), 219–296 (TNVY…RAQK), and 322–399 (VNLF…IAQR). A PABC domain is found at 488–567 (GQFPRNGQQQ…AHAAYQKFKE (80 aa)).

The protein belongs to the polyadenylate-binding protein type-1 family.

Its subcellular location is the cytoplasm. It is found in the nucleus. Binds the poly(A) tail of mRNA. Appears to be an important mediator of the multiple roles of the poly(A) tail in mRNA biogenesis, stability and translation. In the nucleus, involved in both mRNA cleavage and polyadenylation. Is also required for efficient mRNA export to the cytoplasm. Acts in concert with a poly(A)-specific nuclease (PAN) to affect poly(A) tail shortening, which may occur concomitantly with either nucleocytoplasmic mRNA transport or translational initiation. In the cytoplasm, stimulates translation initiation and regulates mRNA decay through translation termination-coupled poly(A) shortening, probably mediated by PAN. This Eremothecium gossypii (strain ATCC 10895 / CBS 109.51 / FGSC 9923 / NRRL Y-1056) (Yeast) protein is Polyadenylate-binding protein, cytoplasmic and nuclear (PAB1).